The chain runs to 63 residues: Antimicrobial peptide 2 (63 aa).

A signal peptide spans Met1–Ala27. 3 disulfide bridges follow: Cys28-Cys45, Cys35-Cys49, and Cys44-Cys60.

The protein belongs to the AMP family. As to quaternary structure, homodimer. In terms of tissue distribution, seed specific.

Its subcellular location is the secreted. Functionally, possesses antifungal activity and is also active on two tested Gram-positive bacteria but is non-toxic for Gram-negative bacteria and cultured human cells. The chain is Antimicrobial peptide 2 (AMP2) from Mirabilis jalapa (Garden four-o'clock).